A 146-amino-acid polypeptide reads, in one-letter code: Hemoglobin subunit beta-1 (146 aa).

The Globin domain maps to 2 to 146 (KWTDKERAVI…VVSALGKQYC (145 aa)). His-63 and His-92 together coordinate heme b.

This sequence belongs to the globin family. In terms of assembly, heterotetramer of two alpha chains and two beta chains. As to expression, red blood cells.

Functionally, involved in oxygen transport from gills to the various peripheral tissues. This chain is Hemoglobin subunit beta-1, found in Lycodes reticulatus (Arctic eelpout).